Here is a 111-residue protein sequence, read N- to C-terminus: Small ribosomal subunit protein uS10 (111 aa).

The protein belongs to the universal ribosomal protein uS10 family. As to quaternary structure, part of the 30S ribosomal subunit.

Its function is as follows. Involved in the binding of tRNA to the ribosomes. The sequence is that of Small ribosomal subunit protein uS10 from Ehrlichia ruminantium (strain Welgevonden).